Here is a 571-residue protein sequence, read N- to C-terminus: Proline--tRNA ligase (571 aa).

This sequence belongs to the class-II aminoacyl-tRNA synthetase family. ProS type 1 subfamily. As to quaternary structure, homodimer.

The protein localises to the cytoplasm. The catalysed reaction is tRNA(Pro) + L-proline + ATP = L-prolyl-tRNA(Pro) + AMP + diphosphate. Functionally, catalyzes the attachment of proline to tRNA(Pro) in a two-step reaction: proline is first activated by ATP to form Pro-AMP and then transferred to the acceptor end of tRNA(Pro). As ProRS can inadvertently accommodate and process non-cognate amino acids such as alanine and cysteine, to avoid such errors it has two additional distinct editing activities against alanine. One activity is designated as 'pretransfer' editing and involves the tRNA(Pro)-independent hydrolysis of activated Ala-AMP. The other activity is designated 'posttransfer' editing and involves deacylation of mischarged Ala-tRNA(Pro). The misacylated Cys-tRNA(Pro) is not edited by ProRS. The polypeptide is Proline--tRNA ligase (Stutzerimonas stutzeri (strain A1501) (Pseudomonas stutzeri)).